We begin with the raw amino-acid sequence, 309 residues long: Homoserine kinase (309 aa).

95–105 (PQSRGLGSSAA) provides a ligand contact to ATP.

This sequence belongs to the GHMP kinase family. Homoserine kinase subfamily.

It localises to the cytoplasm. The catalysed reaction is L-homoserine + ATP = O-phospho-L-homoserine + ADP + H(+). It functions in the pathway amino-acid biosynthesis; L-threonine biosynthesis; L-threonine from L-aspartate: step 4/5. Functionally, catalyzes the ATP-dependent phosphorylation of L-homoserine to L-homoserine phosphate. This chain is Homoserine kinase, found in Corynebacterium efficiens (strain DSM 44549 / YS-314 / AJ 12310 / JCM 11189 / NBRC 100395).